We begin with the raw amino-acid sequence, 262 residues long: Phosphonates import ATP-binding protein PhnC (262 aa).

The ABC transporter domain occupies 5 to 253 (IRVEKLAKTF…RFDHLYRSIN (249 aa)). 37-44 (GPSGSGKS) lines the ATP pocket.

Belongs to the ABC transporter superfamily. Phosphonates importer (TC 3.A.1.9.1) family. In terms of assembly, the complex is composed of two ATP-binding proteins (PhnC), two transmembrane proteins (PhnE) and a solute-binding protein (PhnD).

The protein resides in the cell inner membrane. It catalyses the reaction phosphonate(out) + ATP + H2O = phosphonate(in) + ADP + phosphate + H(+). Part of the ABC transporter complex PhnCDE involved in phosphonates import. Responsible for energy coupling to the transport system. In Shigella boydii serotype 4 (strain Sb227), this protein is Phosphonates import ATP-binding protein PhnC.